We begin with the raw amino-acid sequence, 223 residues long: Peptidyl-tRNA hydrolase (223 aa).

Residue Y16 coordinates tRNA. H21 serves as the catalytic Proton acceptor. Residues F67, N69, and N113 each contribute to the tRNA site.

Belongs to the PTH family. In terms of assembly, monomer.

The protein resides in the cytoplasm. The catalysed reaction is an N-acyl-L-alpha-aminoacyl-tRNA + H2O = an N-acyl-L-amino acid + a tRNA + H(+). Its function is as follows. Hydrolyzes ribosome-free peptidyl-tRNAs (with 1 or more amino acids incorporated), which drop off the ribosome during protein synthesis, or as a result of ribosome stalling. In terms of biological role, catalyzes the release of premature peptidyl moieties from peptidyl-tRNA molecules trapped in stalled 50S ribosomal subunits, and thus maintains levels of free tRNAs and 50S ribosomes. This Helicobacter hepaticus (strain ATCC 51449 / 3B1) protein is Peptidyl-tRNA hydrolase.